A 75-amino-acid chain; its full sequence is UPF0270 protein Avin_35000 (75 aa).

This sequence belongs to the UPF0270 family.

The protein is UPF0270 protein Avin_35000 of Azotobacter vinelandii (strain DJ / ATCC BAA-1303).